A 305-amino-acid polypeptide reads, in one-letter code: Homoserine O-acetyltransferase (305 aa).

Cys142 acts as the Acyl-thioester intermediate in catalysis. Positions 163 and 192 each coordinate substrate. Catalysis depends on His235, which acts as the Proton acceptor. The active site involves Glu237. Residue Arg249 coordinates substrate.

Belongs to the MetA family.

It is found in the cytoplasm. It catalyses the reaction L-homoserine + acetyl-CoA = O-acetyl-L-homoserine + CoA. It functions in the pathway amino-acid biosynthesis; L-methionine biosynthesis via de novo pathway; O-acetyl-L-homoserine from L-homoserine: step 1/1. In terms of biological role, transfers an acetyl group from acetyl-CoA to L-homoserine, forming acetyl-L-homoserine. The chain is Homoserine O-acetyltransferase from Cereibacter sphaeroides (strain KD131 / KCTC 12085) (Rhodobacter sphaeroides).